We begin with the raw amino-acid sequence, 786 residues long: DENN domain-containing protein 1C (786 aa).

Positions 13–158 (FDWFFEAGCP…MDSSITVRSE (146 aa)) constitute a uDENN domain. Residues 182-318 (SLPSIPENRN…VVSLLRLRLR (137 aa)) enclose the cDENN domain. A dDENN domain is found at 320 to 398 (VALSPGEGVS…ESRLEKLNAG (79 aa)). An FXDXF motif motif is present at residues 401–405 (FSDQF). Residues 481–553 (KDGDSGLQRG…LSPGDTQNPW (73 aa)) are disordered. Residues 527-541 (LKTEEGPSEPLRERS) show a composition bias toward basic and acidic residues. The span at 542 to 552 (PTLSPGDTQNP) shows a compositional bias: polar residues. Ser-565 is subject to Phosphoserine. The Clathrin box motif lies at 570 to 579 (DLLSEILDSL). 2 disordered regions span residues 653 to 741 (YSKN…QPPQ) and 762 to 786 (SHVS…CFEN). The span at 657-675 (SCSQPFQQSPPSQGDPGPS) shows a compositional bias: low complexity. Over residues 706-740 (LLVSTEPNSDAVQRLQSISSPSCSHSAENPRNQPP) the composition is skewed to polar residues. The span at 770–786 (PQDKQPRVADLKKCFEN) shows a compositional bias: basic and acidic residues.

Exhibits low nucleotide-independent RAB35-binding activity. Interacts with clathrin heavy chain/CLTC and with AP2A2, but not with AP2B1.

It localises to the cytoplasm. The protein resides in the cytosol. Its subcellular location is the cytoplasmic vesicle. It is found in the clathrin-coated vesicle. Functionally, guanine nucleotide exchange factor (GEF) which may activate RAB8A, RAB13 and RAB35. Promotes the exchange of GDP to GTP, converting inactive GDP-bound Rab proteins into their active GTP-bound form. This Mus musculus (Mouse) protein is DENN domain-containing protein 1C (Dennd1c).